A 258-amino-acid polypeptide reads, in one-letter code: MVALRLIPCLDVANGRVVKGVNFVGLRDAGDPVELAYRYSKSGADELVFLDIAASHEGRATLIEIVRRTAESVTIPFTVGGGISSIEGIKELLRAGADKVSLNSSAVRDPELIAQGANQFGSQCIVVAIDAKRRENCTSEWDVFVNGGRKNTKLDALEWAKKVAGLGAGEILLTSMDGDGTQNGYDLKLTRTIADALQIPVIASGGAGSLEHILEAFTEGKASAALLASLLHDGELTIEQIKDYLLKNQLLIRPVLDM.

Catalysis depends on residues aspartate 11 and aspartate 130.

This sequence belongs to the HisA/HisF family. In terms of assembly, heterodimer of HisH and HisF.

Its subcellular location is the cytoplasm. It catalyses the reaction 5-[(5-phospho-1-deoxy-D-ribulos-1-ylimino)methylamino]-1-(5-phospho-beta-D-ribosyl)imidazole-4-carboxamide + L-glutamine = D-erythro-1-(imidazol-4-yl)glycerol 3-phosphate + 5-amino-1-(5-phospho-beta-D-ribosyl)imidazole-4-carboxamide + L-glutamate + H(+). The protein operates within amino-acid biosynthesis; L-histidine biosynthesis; L-histidine from 5-phospho-alpha-D-ribose 1-diphosphate: step 5/9. In terms of biological role, IGPS catalyzes the conversion of PRFAR and glutamine to IGP, AICAR and glutamate. The HisF subunit catalyzes the cyclization activity that produces IGP and AICAR from PRFAR using the ammonia provided by the HisH subunit. The sequence is that of Imidazole glycerol phosphate synthase subunit HisF from Prochlorococcus marinus (strain MIT 9211).